A 263-amino-acid chain; its full sequence is Lens fiber major intrinsic protein (263 aa).

Topologically, residues 1-9 (MWELRSASF) are cytoplasmic. The chain crosses the membrane as a helical span at residues 10 to 29 (WRAIFAEFFATLFYVFFGLG). The Extracellular portion of the chain corresponds to 30-41 (ASLRWAPGPLHV). A helical membrane pass occupies residues 42-59 (LQVALAFGLALATLVQTV). The Cytoplasmic portion of the chain corresponds to 60–61 (GH). The segment at residues 62–77 (ISGAHVNPAVTFAFLV) is an intramembrane region (discontinuously helical). The NPA 1 signature appears at 68 to 70 (NPA). At 78-82 (GSQMS) the chain is on the cytoplasmic side. Residues 83-106 (LLRAFCYIAAQLLGAVAGAAVLYS) form a helical membrane-spanning segment. Residues 107–127 (VTPPAVRGNLALNTLHAGVSV) are Extracellular-facing. Residues 128–148 (GQATTVEIFLTLQFVLCIFAT) form a helical membrane-spanning segment. Residues 149–156 (YDERRNGR) lie on the Cytoplasmic side of the membrane. A helical membrane pass occupies residues 157 to 175 (MGSVALAVGFSLTLGHLFG). Residues 176-178 (MYY) lie on the Extracellular side of the membrane. Residues 179–193 (TGAGMNPARSFAPAI) constitute an intramembrane region (discontinuously helical). Residues 184–186 (NPA) carry the NPA 2 motif. Residues 194 to 200 (LTRNFSN) are Extracellular-facing. The chain crosses the membrane as a helical span at residues 201–222 (HWVYWVGPIIGGGLGSLLYDFL). Over 223–263 (LFPRLKSVSERLSILKGARPSDSNGQPEGTGEPVELKTQAL) the chain is Cytoplasmic. Residues 227–237 (LKSVSERLSIL) form an interaction with CALM region. Ser235, Ser243, and Ser245 each carry phosphoserine. Positions 240 to 263 (ARPSDSNGQPEGTGEPVELKTQAL) are disordered. Asn246 bears the Deamidated asparagine mark.

This sequence belongs to the MIP/aquaporin (TC 1.A.8) family. Homotetramer; each monomer provides an independent water pore. Two homotetramers on opposing membranes can dimerize, forming a cell-cell junction. Interacts with CALM; the calcium-calmodulin/CALM complex interacts with the cytoplasmic domains of two aquaporins, leading to channel closure. Interacts with BFSP1 (via C-terminus); prevents calcium-dependent inhibition of the water channel activity. Post-translationally, subject to partial proteolytic cleavage in the eye lens core. Partial proteolysis promotes interactions between tetramers from adjoining membranes. In terms of processing, fatty acylated at Met-1 and Lys-238. The acyl modifications, in decreasing order of ion abundance, are: oleoyl (C18:1) &gt; palmitoyl (C16:0) &gt; stearoyl (C18:0) &gt; eicosenoyl (C20:1) &gt; dihomo-gamma-linolenoyl (C20:3) &gt; palmitoleoyl (C16:1) &gt; eicosadienoyl (C20:2).

It localises to the cell membrane. The protein localises to the cell junction. It catalyses the reaction H2O(in) = H2O(out). Its activity is regulated as follows. The water channel activity is inhibited by calcium through calmodulin/CALM. In terms of biological role, aquaporins form homotetrameric transmembrane channels, with each monomer independently mediating water transport across the plasma membrane along its osmotic gradient. Specifically expressed in lens fiber cells, this aquaporin is crucial for maintaining lens water homeostasis and transparency. Beyond water permeability, it also acts as a cell-to-cell adhesion molecule, forming thin junctions between lens fiber cells that are essential for maintaining the ordered structure and transparency of the lens. This Mus musculus (Mouse) protein is Lens fiber major intrinsic protein.